A 401-amino-acid chain; its full sequence is Probable acid ceramidase (401 aa).

An N-terminal signal peptide occupies residues 1–22 (MKPVAISLSLLLLVTLLPGSEQ). N101, N303, and N371 each carry an N-linked (GlcNAc...) asparagine glycan.

The protein belongs to the acid ceramidase family.

The enzyme catalyses an N-acyl-sphingoid base + H2O = a sphingoid base + a fatty acid. It carries out the reaction an N-acylsphing-4-enine + H2O = sphing-4-enine + a fatty acid. The catalysed reaction is an N-acyl-15-methylhexadecasphing-4-enine + H2O = 15-methylhexadecasphing-4-enine + a fatty acid. Its function is as follows. Catalyzes the hydrolysis of ceramides into sphingoid base and free fatty acid. C.elegans contain specific sphingoid bases, which are unique or different in structure compared to the sphingoid bases found in other animals. Two examples of these distinctive compounds are: 15-methylhexadecasphinganine and 15-methylhexadecasphing-4-enine. This chain is Probable acid ceramidase, found in Caenorhabditis elegans.